Reading from the N-terminus, the 23-residue chain is Cytochrome c3-1 (23 aa).

Positions 1-23 (AAPKAPADGLKMDKTKQXVVFNH) are disordered. His23 contributes to the heme binding site.

Post-translationally, binds 4 heme groups per subunit.

The protein localises to the periplasm. In terms of biological role, participates in sulfate respiration coupled with phosphorylation by transferring electrons from the enzyme dehydrogenase to ferredoxin. This Nitratidesulfovibrio vulgaris (Desulfovibrio vulgaris) protein is Cytochrome c3-1.